A 456-amino-acid polypeptide reads, in one-letter code: NADH oxidase (456 aa).

Asn10 serves as a coordination point for FAD. His11 (proton acceptor) is an active-site residue. FAD-binding residues include Ala12, Asp34, Gln35, Cys44, Val81, Ala110, Ser113, Lys143, and Tyr170. Residue Cys44 is the Redox-active of the active site. Cys44 carries the post-translational modification Cysteine sulfinic acid (-SO2H). Positions 171, 190, 199, and 254 each coordinate NAD(+). Asp292 provides a ligand contact to FAD. Residue Ala308 coordinates NAD(+). FAD contacts are provided by Leu309, Ala310, and Ser311. Position 339 (Gly339) interacts with NAD(+). Phe436 provides a ligand contact to FAD.

FAD is required as a cofactor.

The enzyme catalyses 2 NADH + O2 + 2 H(+) = 2 NAD(+) + 2 H2O. Catalyzes the four-electron reduction of molecular oxygen to water. This chain is NADH oxidase, found in Streptococcus pyogenes serotype M6 (strain ATCC BAA-946 / MGAS10394).